A 113-amino-acid polypeptide reads, in one-letter code: MCRFPTFLLIAIAITMLPTILSITCFVGKNSVVAEEKDFDYCATMKNISTKEITYSGRTGATRVFEKDANDLTINNCYIDFNDQTALTCYCRRSKCNKVVSSLQFDLMTIATK.

The N-terminal stretch at 1-22 (MCRFPTFLLIAIAITMLPTILS) is a signal peptide. The N-linked (GlcNAc...) asparagine glycan is linked to Asn-47.

It is found in the secreted. This is an uncharacterized protein from Caenorhabditis elegans.